Consider the following 400-residue polypeptide: Dual-specificity RNA methyltransferase RlmN (400 aa).

The active-site Proton acceptor is the Glu-125. Residues 131 to 372 enclose the Radical SAM core domain; the sequence is ETDRGTLCVS…VRTPRGRDIL (242 aa). Cys-138 and Cys-375 form a disulfide bridge. Residues Cys-145, Cys-149, and Cys-152 each contribute to the [4Fe-4S] cluster site. Residues 201–202, Ser-233, 255–257, and Asn-332 contribute to the S-adenosyl-L-methionine site; these read GE and SLH. Cys-375 acts as the S-methylcysteine intermediate in catalysis.

The protein belongs to the radical SAM superfamily. RlmN family. [4Fe-4S] cluster serves as cofactor.

The protein localises to the cytoplasm. It carries out the reaction adenosine(2503) in 23S rRNA + 2 reduced [2Fe-2S]-[ferredoxin] + 2 S-adenosyl-L-methionine = 2-methyladenosine(2503) in 23S rRNA + 5'-deoxyadenosine + L-methionine + 2 oxidized [2Fe-2S]-[ferredoxin] + S-adenosyl-L-homocysteine. The enzyme catalyses adenosine(37) in tRNA + 2 reduced [2Fe-2S]-[ferredoxin] + 2 S-adenosyl-L-methionine = 2-methyladenosine(37) in tRNA + 5'-deoxyadenosine + L-methionine + 2 oxidized [2Fe-2S]-[ferredoxin] + S-adenosyl-L-homocysteine. Specifically methylates position 2 of adenine 2503 in 23S rRNA and position 2 of adenine 37 in tRNAs. m2A2503 modification seems to play a crucial role in the proofreading step occurring at the peptidyl transferase center and thus would serve to optimize ribosomal fidelity. This chain is Dual-specificity RNA methyltransferase RlmN, found in Bradyrhizobium diazoefficiens (strain JCM 10833 / BCRC 13528 / IAM 13628 / NBRC 14792 / USDA 110).